Consider the following 513-residue polypeptide: GMP synthase [glutamine-hydrolyzing] (513 aa).

A Glutamine amidotransferase type-1 domain is found at 9-198; sequence LILVLDFGSQ…VRRVCDCIGE (190 aa). The Nucleophile role is filled by Cys86. Residues His172 and Glu174 contribute to the active site. Residues 199-388 enclose the GMPS ATP-PPase domain; sequence WSMENFIEIE…LGIPEHLVWR (190 aa). 226–232 contacts ATP; sequence SGGVDSS.

Homodimer.

It carries out the reaction XMP + L-glutamine + ATP + H2O = GMP + L-glutamate + AMP + diphosphate + 2 H(+). Its pathway is purine metabolism; GMP biosynthesis; GMP from XMP (L-Gln route): step 1/1. Functionally, catalyzes the synthesis of GMP from XMP. The polypeptide is GMP synthase [glutamine-hydrolyzing] (Staphylococcus saprophyticus subsp. saprophyticus (strain ATCC 15305 / DSM 20229 / NCIMB 8711 / NCTC 7292 / S-41)).